The chain runs to 475 residues: Ribulose bisphosphate carboxylase large chain (475 aa).

The propeptide occupies 1-2 (MV). Pro3 bears the N-acetylproline mark. At Lys14 the chain carries N6,N6,N6-trimethyllysine. The substrate site is built by Asn123 and Thr173. The active-site Proton acceptor is the Lys175. A substrate-binding site is contributed by Lys177. Residues Lys201, Asp203, and Glu204 each contribute to the Mg(2+) site. Position 201 is an N6-carboxylysine (Lys201). Residue His294 is the Proton acceptor of the active site. Substrate contacts are provided by Arg295, His327, and Ser379.

This sequence belongs to the RuBisCO large chain family. Type I subfamily. Heterohexadecamer of 8 large chains and 8 small chains; disulfide-linked. The disulfide link is formed within the large subunit homodimers. It depends on Mg(2+) as a cofactor. Post-translationally, the disulfide bond which can form in the large chain dimeric partners within the hexadecamer appears to be associated with oxidative stress and protein turnover.

The protein localises to the plastid. Its subcellular location is the chloroplast. The enzyme catalyses 2 (2R)-3-phosphoglycerate + 2 H(+) = D-ribulose 1,5-bisphosphate + CO2 + H2O. It catalyses the reaction D-ribulose 1,5-bisphosphate + O2 = 2-phosphoglycolate + (2R)-3-phosphoglycerate + 2 H(+). In terms of biological role, ruBisCO catalyzes two reactions: the carboxylation of D-ribulose 1,5-bisphosphate, the primary event in carbon dioxide fixation, as well as the oxidative fragmentation of the pentose substrate in the photorespiration process. Both reactions occur simultaneously and in competition at the same active site. This chain is Ribulose bisphosphate carboxylase large chain, found in Tetradesmus obliquus (Green alga).